The following is a 291-amino-acid chain: Sesquiterpene cyclase astC (291 aa).

This sequence belongs to the HAD-like hydrolase superfamily.

The catalysed reaction is (2E,6E)-farnesyl diphosphate = (S,S)-drim-8-en-11-yl diphosphate. The protein operates within secondary metabolite biosynthesis; terpenoid biosynthesis. Sesquiterpene cyclase; part of the gene cluster that mediates the biosynthesis of astellolides, drimane-type sesquiterpene esters that show antimicrobial, anti-inflammatory, and anti-tumor activities. The first step in astellolide biosynthesis is performed by the sesquiterpene cyclase astC that catalyzes the formation of drimanyl pyrophosphate from farnesyl pyrophosphate. Drimanyl pyrophosphate is then dephosphorylated by the sesquiterpene phosphatase astI to produce drimanyl monophosphate which is further dephosphorylated to drim-8-ene-11-ol by atsK. Drim-8-ene-11-ol is converted to confertifolin, probably by the cytochrome P450 monooxygenase astD and/or the dehydrogenase astE. The cytochrome P450 monooxygenases astB, astF and astJ then hydroxylate confertifolin at C6, C14, or C15 to form trihydroxy confertifolin. The nonribosomal peptide synthetase astA catalyzes ester bond formation between trihydroxy contifolin and benzoic acid (BA) or 4-hydroxy benzoic acid (4HBA), leading to the formation of dideacetyl astellolides A and B, respectively. Finally, the O-acetyltransferase astG converts dideacetyl astellolides A and B into deacetyl astellolides A and B. In Aspergillus oryzae (strain ATCC 42149 / RIB 40) (Yellow koji mold), this protein is Sesquiterpene cyclase astC.